Reading from the N-terminus, the 440-residue chain is Xylose isomerase (440 aa).

Catalysis depends on residues His-101 and Asp-104. Residues Glu-232, Glu-268, His-271, Asp-296, Asp-307, Asp-309, and Asp-339 each coordinate Mg(2+).

The protein belongs to the xylose isomerase family. Homotetramer. Mg(2+) is required as a cofactor.

The protein localises to the cytoplasm. It catalyses the reaction alpha-D-xylose = alpha-D-xylulofuranose. In Escherichia coli O17:K52:H18 (strain UMN026 / ExPEC), this protein is Xylose isomerase.